Here is a 198-residue protein sequence, read N- to C-terminus: Nucleoid occlusion factor SlmA (198 aa).

The HTH tetR-type domain occupies N10–L70. Positions T33–F52 form a DNA-binding region, H-T-H motif. Residues E117 to R144 are a coiled coil.

Belongs to the nucleoid occlusion factor SlmA family. Homodimer. Interacts with FtsZ.

It is found in the cytoplasm. It localises to the nucleoid. In terms of biological role, required for nucleoid occlusion (NO) phenomenon, which prevents Z-ring formation and cell division over the nucleoid. Acts as a DNA-associated cell division inhibitor that binds simultaneously chromosomal DNA and FtsZ, and disrupts the assembly of FtsZ polymers. SlmA-DNA-binding sequences (SBS) are dispersed on non-Ter regions of the chromosome, preventing FtsZ polymerization at these regions. The sequence is that of Nucleoid occlusion factor SlmA from Salmonella dublin (strain CT_02021853).